We begin with the raw amino-acid sequence, 145 residues long: Deoxyuridine 5'-triphosphate nucleotidohydrolase (145 aa).

Substrate is bound by residues 62–64 (RSG), Asn-75, 79–81 (TVD), and Lys-89.

The protein belongs to the dUTPase family. It depends on Mg(2+) as a cofactor.

It carries out the reaction dUTP + H2O = dUMP + diphosphate + H(+). The protein operates within pyrimidine metabolism; dUMP biosynthesis; dUMP from dCTP (dUTP route): step 2/2. In terms of biological role, this enzyme is involved in nucleotide metabolism: it produces dUMP, the immediate precursor of thymidine nucleotides and it decreases the intracellular concentration of dUTP so that uracil cannot be incorporated into DNA. This Helicobacter pylori (strain P12) protein is Deoxyuridine 5'-triphosphate nucleotidohydrolase.